An 86-amino-acid chain; its full sequence is Small ribosomal subunit protein bS20 (86 aa).

Belongs to the bacterial ribosomal protein bS20 family.

Its function is as follows. Binds directly to 16S ribosomal RNA. The sequence is that of Small ribosomal subunit protein bS20 from Rhodococcus opacus (strain B4).